Reading from the N-terminus, the 490-residue chain is Betaine aldehyde dehydrogenase (490 aa).

Thr-26, Ile-27, and Asp-93 together coordinate K(+). 150–152 is a binding site for NAD(+); sequence GAW. The active-site Charge relay system is the Lys-162. Residue 176–179 coordinates NAD(+); that stretch reads KPSE. Val-180 provides a ligand contact to K(+). 230-233 is a binding site for NAD(+); it reads GVAS. A K(+)-binding site is contributed by Leu-246. Glu-252 functions as the Proton acceptor in the catalytic mechanism. Gly-254, Cys-286, and Glu-387 together coordinate NAD(+). Cys-286 functions as the Nucleophile in the catalytic mechanism. Cysteine sulfenic acid (-SOH) is present on Cys-286. Residues Lys-457 and Gly-460 each contribute to the K(+) site. Glu-464 (charge relay system) is an active-site residue.

This sequence belongs to the aldehyde dehydrogenase family. In terms of assembly, dimer of dimers. K(+) serves as cofactor.

The catalysed reaction is betaine aldehyde + NAD(+) + H2O = glycine betaine + NADH + 2 H(+). Its pathway is amine and polyamine biosynthesis; betaine biosynthesis via choline pathway; betaine from betaine aldehyde: step 1/1. In terms of biological role, involved in the biosynthesis of the osmoprotectant glycine betaine. Catalyzes the irreversible oxidation of betaine aldehyde to the corresponding acid. This is Betaine aldehyde dehydrogenase from Escherichia coli O139:H28 (strain E24377A / ETEC).